Consider the following 136-residue polypeptide: Fluoride-specific ion channel FluC (136 aa).

The next 4 membrane-spanning stretches (helical) occupy residues 3–23 (TLPPLYATLNVALGGAIGAVL), 46–66 (ATLAINALGSLLMGVLAGVLF), 78–98 (LLIGTGILGGFTTFSAFSLEV), and 109–129 (FAALYVVLSVSLAISALVFGL). Residues glycine 86 and threonine 89 each contribute to the Na(+) site.

The protein belongs to the fluoride channel Fluc/FEX (TC 1.A.43) family.

It localises to the cell inner membrane. It catalyses the reaction fluoride(in) = fluoride(out). Its activity is regulated as follows. Na(+) is not transported, but it plays an essential structural role and its presence is essential for fluoride channel function. In terms of biological role, fluoride-specific ion channel. Important for reducing fluoride concentration in the cell, thus reducing its toxicity. The protein is Fluoride-specific ion channel FluC of Erythrobacter litoralis (strain HTCC2594).